Here is a 256-residue protein sequence, read N- to C-terminus: uncharacterized protein (256 aa).

The protein to B.subtilis LplA.

This is an uncharacterized protein from Niallia circulans (Bacillus circulans).